Reading from the N-terminus, the 206-residue chain is LexA repressor (206 aa).

Residues valine 28 to threonine 48 constitute a DNA-binding region (H-T-H motif). Catalysis depends on for autocatalytic cleavage activity residues serine 127 and lysine 165.

This sequence belongs to the peptidase S24 family. As to quaternary structure, homodimer.

It catalyses the reaction Hydrolysis of Ala-|-Gly bond in repressor LexA.. Represses a number of genes involved in the response to DNA damage (SOS response), including recA and lexA. In the presence of single-stranded DNA, RecA interacts with LexA causing an autocatalytic cleavage which disrupts the DNA-binding part of LexA, leading to derepression of the SOS regulon and eventually DNA repair. This is LexA repressor from Lactobacillus delbrueckii subsp. bulgaricus (strain ATCC 11842 / DSM 20081 / BCRC 10696 / JCM 1002 / NBRC 13953 / NCIMB 11778 / NCTC 12712 / WDCM 00102 / Lb 14).